The chain runs to 225 residues: Uracil-DNA glycosylase (225 aa).

Aspartate 65 (proton acceptor) is an active-site residue.

Belongs to the uracil-DNA glycosylase (UDG) superfamily. UNG family.

The protein resides in the cytoplasm. It catalyses the reaction Hydrolyzes single-stranded DNA or mismatched double-stranded DNA and polynucleotides, releasing free uracil.. Functionally, excises uracil residues from the DNA which can arise as a result of misincorporation of dUMP residues by DNA polymerase or due to deamination of cytosine. In Alkaliphilus oremlandii (strain OhILAs) (Clostridium oremlandii (strain OhILAs)), this protein is Uracil-DNA glycosylase.